Consider the following 122-residue polypeptide: Small ribosomal subunit protein uS13 (122 aa).

Residues 94-122 (KGLPVRGQRTHTNARTRKGPRRAIAGKKK) are disordered.

This sequence belongs to the universal ribosomal protein uS13 family. As to quaternary structure, part of the 30S ribosomal subunit. Forms a loose heterodimer with protein S19. Forms two bridges to the 50S subunit in the 70S ribosome.

Located at the top of the head of the 30S subunit, it contacts several helices of the 16S rRNA. In the 70S ribosome it contacts the 23S rRNA (bridge B1a) and protein L5 of the 50S subunit (bridge B1b), connecting the 2 subunits; these bridges are implicated in subunit movement. Contacts the tRNAs in the A and P-sites. The sequence is that of Small ribosomal subunit protein uS13 from Syntrophus aciditrophicus (strain SB).